The following is a 358-amino-acid chain: MATIVVAMSGGVDSSAVAAMLHEQGHNVIGITLQLYDYGIAVGKKNACCAGQDIYDAKMVANKLGIPHYVLDYENKFKESVIDNFVDSYLHGETPLPCVQCNKSVKFRDLINTAKELGADKLATGHYVRKINGYNGAELHTGLDTTKDQSYFLFTITREQLEYLSFPLGGFTKYETRKLASKFGLDIADKPDSQDICFVPDGNYKTVINKIRPEANTSGKIVHINGFELGEHSGIINYTIGQRRGLGIAYNEPLYVVKIDPSNNIVYVGQESALHVHEFIIKDVNWLADEIKDHEKLAVDVKIRSTRPPCHAEISKLCNDRIKVKFLSKEKAVAPGQACVIYAGERVLGGGWITSNIS.

ATP contacts are provided by residues 7-14 (AMSGGVDS) and L33. The active-site Nucleophile is the C101. C101 and C197 form a disulfide bridge. G125 is an ATP binding site. The segment at 147–149 (KDQ) is interaction with tRNA. Residue C197 is the Cysteine persulfide intermediate of the active site.

This sequence belongs to the MnmA/TRMU family.

It is found in the cytoplasm. The catalysed reaction is S-sulfanyl-L-cysteinyl-[protein] + uridine(34) in tRNA + AH2 + ATP = 2-thiouridine(34) in tRNA + L-cysteinyl-[protein] + A + AMP + diphosphate + H(+). In terms of biological role, catalyzes the 2-thiolation of uridine at the wobble position (U34) of tRNA, leading to the formation of s(2)U34. The polypeptide is tRNA-specific 2-thiouridylase MnmA (Rickettsia prowazekii (strain Madrid E)).